The chain runs to 483 residues: S-adenosylhomocysteine hydrolase-like protein 1 (483 aa).

Residues 1 to 56 form a disordered region; sequence MQEFTKFPTKTGRRSLSRSISQSSTDSYSSAASYTDSSDDEVSPREKQQTNSKGSS. Positions 17–36 are enriched in low complexity; sequence SRSISQSSTDSYSSAASYTD. Residues 18–45 are PEST; it reads RSISQSSTDSYSSAASYTDSSDDEVSPR. Ser-21 carries the post-translational modification Phosphoserine; by PKD. Phosphoserine occurs at positions 24, 27, 30, and 37. The tract at residues 91–154 is interaction with BCL2L10; that stretch reads QGEKPLAGAK…EAGVAVFAWK (64 aa). Substrate contacts are provided by Thr-108, Asp-182, Glu-207, Lys-237, and Asp-241. An NAD binding region spans residues 234–401; that stretch reads SVTKQKFDNL…EGRLLNLSCS (168 aa). NAD(+) contacts are provided by residues 271 to 275, Glu-294, and Asn-329; that span reads GYGEV. The residue at position 344 (Ser-344) is a Phosphoserine. NAD(+) is bound at residue 350-352; it reads MGH. The segment at 473 to 483 is PDZ-binding; the sequence is NGPFKPNYYRY.

This sequence belongs to the adenosylhomocysteinase family. As to quaternary structure, forms multimers. Forms heteromultimers with AHCYL2 (via the C-terminal region). Interacts (when phosphorylated) with ITPR1 (when not phosphorylated); the interaction suppresses inositol 1,4,5-trisphosphate binding to ITPR1. Interacts with BCL2L10; this strengthens the interaction of AHCYL1 with ITPR1. Interacts with CFTR and SLC26A6; the interactions take place once AHCYL1 is released from ITPR1 and increase CFTR and SLC26A6 activities. Interacts with RRM1; in a phosphorylation- and (dATP)-dependent manner. Interacts (via PEST domain when phosphorylated) with SLC4A4 isoform 1 but not isoform 2; the interaction increases SLC4A4 isoform 1 activity. Interacts (when phosphorylated) with SLC9A3; the interaction is required for SLC9A3 apical location and activity. Interacts (when phosphorylated) with FIP1L1; the interaction is direct and associates AHCYL1 with the CPSF complex and RNA. Interacts with PAPOLA. Interacts with ZCCHC4. Interacts with AHCY. Requires NAD(+) as cofactor. In terms of processing, phosphorylated at Ser/Thr residues between Ser-21 and Thr-25 in the PEST region: required for interaction with dATP-bound RRM1 and ITPR1. Phosphorylation at Ser-21 by PRKD1 and CAMK4 is required for further phosphorylations by CSNK1A1. Phosphorylation is induced by oxidative stress. Probably phosphorylated by CAMK2A; phosphorylation at Ser-21 may be required for interaction with SLC9A3. Dephosphorylated in response to apoptotic stress conditions which causes translocation of both AHCYL1 and BCL2L10 from mitochondria-associated endoplasmic reticulum membranes and promotes apoptosis. As to expression, expressed in kidney proximal tubules and outer medulla (at protein level).

Its subcellular location is the endoplasmic reticulum. It is found in the cytoplasm. The protein localises to the cytosol. The protein resides in the apical cell membrane. It localises to the microsome. Multifaceted cellular regulator which coordinates several essential cellular functions including regulation of epithelial HCO3(-) and fluid secretion, mRNA processing and DNA replication. Regulates ITPR1 sensitivity to inositol 1,4,5-trisphosphate, competing for the common binding site and acting as endogenous 'pseudoligand' whose inhibitory activity can be modulated by its phosphorylation status. Promotes the formation of contact points between the endoplasmic reticulum (ER) and mitochondria, facilitating transfer of Ca(2+) from the ER to mitochondria. Under normal cellular conditions, functions cooperatively with BCL2L10 to limit ITPR1-mediated Ca(2+) release but, under apoptotic stress conditions, dephosphorylated which promotes dissociation of both AHCYL1 and BCL2L10 from mitochondria-associated endoplasmic reticulum membranes, inhibits BCL2L10 interaction with ITPR1 and leads to increased Ca(2+) transfer to mitochondria which promotes apoptosis. In the pancreatic and salivary ducts, at resting state, attenuates inositol 1,4,5-trisphosphate-induced calcium release by interacting with ITPR1. When extracellular stimuli induce ITPR1 phosphorylation or inositol 1,4,5-trisphosphate production, dissociates from ITPR1 to interact with CFTR and SLC26A6, mediating their synergistic activation by calcium and cAMP that stimulates the epithelial secretion of electrolytes and fluid. Also activates basolateral SLC4A4 isoform 1 to coordinate fluid and HCO3(-) secretion. Inhibits the effect of STK39 on SLC4A4 and CFTR by recruiting PP1 phosphatase which activates SLC4A4, SLC26A6 and CFTR through dephosphorylation. Mediates the induction of SLC9A3 surface expression produced by Angiotensin-2. Depending on the cell type, activates SLC9A3 in response to calcium or reverses SLC9A3R2-dependent calcium inhibition. May modulate the polyadenylation state of specific mRNAs, both by controlling the subcellular location of FIP1L1 and by inhibiting PAPOLA activity, in response to a stimulus that alters its phosphorylation state. Acts as a (dATP)-dependent inhibitor of ribonucleotide reductase large subunit RRM1, controlling the endogenous dNTP pool and ensuring normal cell cycle progression. In vitro does not exhibit any S-adenosyl-L-homocysteine hydrolase activity. The sequence is that of S-adenosylhomocysteine hydrolase-like protein 1 from Rattus norvegicus (Rat).